A 241-amino-acid polypeptide reads, in one-letter code: Phosphoribosylaminoimidazole-succinocarboxamide synthase (241 aa).

Belongs to the SAICAR synthetase family.

It carries out the reaction 5-amino-1-(5-phospho-D-ribosyl)imidazole-4-carboxylate + L-aspartate + ATP = (2S)-2-[5-amino-1-(5-phospho-beta-D-ribosyl)imidazole-4-carboxamido]succinate + ADP + phosphate + 2 H(+). It participates in purine metabolism; IMP biosynthesis via de novo pathway; 5-amino-1-(5-phospho-D-ribosyl)imidazole-4-carboxamide from 5-amino-1-(5-phospho-D-ribosyl)imidazole-4-carboxylate: step 1/2. This chain is Phosphoribosylaminoimidazole-succinocarboxamide synthase, found in Latilactobacillus sakei subsp. sakei (strain 23K) (Lactobacillus sakei subsp. sakei).